The primary structure comprises 400 residues: Acetate kinase (400 aa).

Asn10 contacts Mg(2+). ATP is bound at residue Lys17. Arg91 contributes to the substrate binding site. The active-site Proton donor/acceptor is the Asp148. ATP-binding positions include 208-212 (HLGNG), 283-285 (DCR), and 331-335 (GIGEN). Glu385 is a binding site for Mg(2+).

The protein belongs to the acetokinase family. Homodimer. The cofactor is Mg(2+). It depends on Mn(2+) as a cofactor.

Its subcellular location is the cytoplasm. The enzyme catalyses acetate + ATP = acetyl phosphate + ADP. Its pathway is metabolic intermediate biosynthesis; acetyl-CoA biosynthesis; acetyl-CoA from acetate: step 1/2. Its function is as follows. Catalyzes the formation of acetyl phosphate from acetate and ATP. Can also catalyze the reverse reaction. The polypeptide is Acetate kinase (Shewanella frigidimarina (strain NCIMB 400)).